We begin with the raw amino-acid sequence, 620 residues long: Long-chain fatty acid transport protein 2 (620 aa).

Residues 1 to 4 are Lumenal-facing; the sequence is MLPV. Residues 5–27 form a helical membrane-spanning segment; it reads LYTGLAGLLLLPLLLTCCCPYLL. Topologically, residues 28-106 are cytoplasmic; it reads QDVRFFLQLA…DHLGLRQGDC (79 aa). A helical membrane pass occupies residues 107–127; that stretch reads VALFMGNEPAYVWLWLGLLKL. Residues 128–267 are Lumenal-facing; the sequence is GCPMACLNYN…DVIYTTMPLY (140 aa). 222–233 contributes to the AMP binding site; sequence YIYTSGTTGLPK. The chain crosses the membrane as a helical span at residues 268–288; sequence HSAALMIGLHGCIVVGATFAL. Residues 289–620 are Cytoplasmic-facing; sequence RSKFSASQFW…NAIIDKTLKL (332 aa). Lys-291 is subject to N6-acetyllysine. Thr-577 carries the phosphothreonine modification.

The protein belongs to the ATP-dependent AMP-binding enzyme family. In terms of tissue distribution, liver and kidney (at protein level).

The protein resides in the endoplasmic reticulum membrane. The protein localises to the peroxisome membrane. Its subcellular location is the cell membrane. It localises to the microsome. The catalysed reaction is a fatty acid(in) = a fatty acid(out). The enzyme catalyses (9Z)-octadecenoate(out) = (9Z)-octadecenoate(in). It carries out the reaction a long-chain fatty acid + ATP + CoA = a long-chain fatty acyl-CoA + AMP + diphosphate. It catalyses the reaction (5Z,8Z,11Z,14Z)-eicosatetraenoate + ATP + CoA = (5Z,8Z,11Z,14Z)-eicosatetraenoyl-CoA + AMP + diphosphate. The catalysed reaction is (9Z,12Z,15Z)-octadecatrienoate + ATP + CoA = (9Z,12Z,15Z)-octadecatrienoyl-CoA + AMP + diphosphate. The enzyme catalyses hexadecanoate + ATP + CoA = hexadecanoyl-CoA + AMP + diphosphate. It carries out the reaction (9Z)-octadecenoate + ATP + CoA = (9Z)-octadecenoyl-CoA + AMP + diphosphate. It catalyses the reaction 2,6,10,14-tetramethylpentadecanoate + ATP + CoA = pristanoyl-CoA + AMP + diphosphate. The catalysed reaction is (E)-hexadec-2-enoate + ATP + CoA = (2E)-hexadecenoyl-CoA + AMP + diphosphate. The enzyme catalyses 3,7,11,15-tetramethylhexadecanoate + ATP + CoA = phytanoyl-CoA + AMP + diphosphate. It carries out the reaction a very long-chain fatty acid + ATP + CoA = a very long-chain fatty acyl-CoA + AMP + diphosphate. It catalyses the reaction tetracosanoate + ATP + CoA = tetracosanoyl-CoA + AMP + diphosphate. The catalysed reaction is (4Z,7Z,10Z,13Z,16Z,19Z)-docosahexaenoate + ATP + CoA = (4Z,7Z,10Z,13Z,16Z,19Z)-docosahexaenoyl-CoA + AMP + diphosphate. The enzyme catalyses (25R)-3alpha,7alpha,12alpha-trihydroxy-5beta-cholestan-26-oate + ATP + CoA = (25R)-3alpha,7alpha,12alpha-trihydroxy-5beta-cholestan-26-oyl-CoA + AMP + diphosphate. In terms of biological role, mediates the import of long-chain fatty acids (LCFA) into the cell by facilitating their transport across cell membranes, playing an important role in hepatic fatty acid uptake. Also functions as an acyl-CoA ligase catalyzing the ATP-dependent formation of fatty acyl-CoA using LCFA and very-long-chain fatty acids (VLCFA) as substrates, which prevents fatty acid efflux from cells and might drive more fatty acid uptake. Plays a pivotal role in regulating available LCFA substrates from exogenous sources in tissues undergoing high levels of beta-oxidation or triglyceride synthesis. Can also activate branched-chain fatty acids such as phytanic acid and pristanic acid. May contribute to the synthesis of sphingosine-1-phosphate. Does not activate C24 bile acids, cholate and chenodeoxycholate. In vitro, activates 3-alpha,7-alpha,12-alpha-trihydroxy-5-beta-cholestanate (THCA), the C27 precursor of cholic acid deriving from the de novo synthesis from cholesterol. However, it is not critical for THCA activation and bile synthesis in vivo. The chain is Long-chain fatty acid transport protein 2 (Slc27a2) from Rattus norvegicus (Rat).